A 671-amino-acid chain; its full sequence is UvrABC system protein B (671 aa).

The 388-residue stretch at 25-412 (EGIEAGLSHQ…AGRVVEQVVR (388 aa)) folds into the Helicase ATP-binding domain. 38-45 (GVTGSGKT) contacts ATP. Positions 91–114 (YYDYYQPEAYVPSSDTFIEKDASI) match the Beta-hairpin motif. One can recognise a Helicase C-terminal domain in the interval 429 to 582 (QVDDLLSEIR…QIAFNEANGI (154 aa)). Positions 632–667 (TKRIKQLEEKMMQFARDLEFEAAAQLRDEIAQLRER) constitute a UVR domain.

It belongs to the UvrB family. As to quaternary structure, forms a heterotetramer with UvrA during the search for lesions. Interacts with UvrC in an incision complex.

The protein resides in the cytoplasm. Functionally, the UvrABC repair system catalyzes the recognition and processing of DNA lesions. A damage recognition complex composed of 2 UvrA and 2 UvrB subunits scans DNA for abnormalities. Upon binding of the UvrA(2)B(2) complex to a putative damaged site, the DNA wraps around one UvrB monomer. DNA wrap is dependent on ATP binding by UvrB and probably causes local melting of the DNA helix, facilitating insertion of UvrB beta-hairpin between the DNA strands. Then UvrB probes one DNA strand for the presence of a lesion. If a lesion is found the UvrA subunits dissociate and the UvrB-DNA preincision complex is formed. This complex is subsequently bound by UvrC and the second UvrB is released. If no lesion is found, the DNA wraps around the other UvrB subunit that will check the other stand for damage. The polypeptide is UvrABC system protein B (Pseudomonas putida (strain ATCC 47054 / DSM 6125 / CFBP 8728 / NCIMB 11950 / KT2440)).